Consider the following 394-residue polypeptide: p-hydroxybenzoate hydroxylase (394 aa).

Residues serine 13, glutamate 32, arginine 42–valine 47, and glutamine 102 contribute to the FAD site. Residues tyrosine 201, serine 212 to arginine 214, and tyrosine 222 each bind substrate. Aspartate 286 contributes to the FAD binding site. Proline 293 is a substrate binding site. Leucine 299–asparagine 300 serves as a coordination point for FAD.

Belongs to the aromatic-ring hydroxylase family. Homodimer. Requires FAD as cofactor.

The enzyme catalyses 4-hydroxybenzoate + NADPH + O2 + H(+) = 3,4-dihydroxybenzoate + NADP(+) + H2O. Its pathway is aromatic compound metabolism; benzoate degradation via hydroxylation; 3,4-dihydroxybenzoate from benzoate: step 2/2. In terms of biological role, catalyzes the incorporation of an atom of dioxygen into p-hydroxybenzoate (p-OHB) to form 3,4-dihydroxybenzoate (3,4DOHB). The reaction occurs in two parts: reduction of the flavin adenine dinucleotide (FAD) in the enzyme by reduced nicotinamide adenine dinucleotide phosphate (NADPH) in response to binding p-hydroxybenzoate to the enzyme and oxidation of reduced FAD with oxygen to form a hydroperoxide, which then oxygenates p-hydroxybenzoate. The chain is p-hydroxybenzoate hydroxylase from Pseudomonas aeruginosa (strain ATCC 15692 / DSM 22644 / CIP 104116 / JCM 14847 / LMG 12228 / 1C / PRS 101 / PAO1).